Here is a 648-residue protein sequence, read N- to C-terminus: ABC transporter G family member 14 (648 aa).

Residues 53-304 (LKFEEVVYKV…FSSLGFSTSL (252 aa)) form the ABC transporter domain. 99–106 (GPSGSGKT) serves as a coordination point for ATP. Asn-346 carries N-linked (GlcNAc...) asparagine glycosylation. The region spanning 384–590 (YQFTVLLQRG…CYKLLLGIQY (207 aa)) is the ABC transmembrane type-2 domain. Transmembrane regions (helical) follow at residues 405–425 (LRIF…WHTP), 435–455 (LLFF…VFTF), 485–505 (LPLE…MGGL), 512–532 (FILS…LGLA), 543–562 (ATTL…GYYV), 569–591 (IVWL…IQYT), and 620–640 (LWID…MAYM).

This sequence belongs to the ABC transporter superfamily. ABCG family. Eye pigment precursor importer (TC 3.A.1.204) subfamily. As to quaternary structure, forms heterodimers with ABCG11. In terms of tissue distribution, accumulates primarily in the pericycle and stelar cells of roots. Expressed in leaves, stems, flowers and siliques, and, at low levels, in roots. Accumulates in the phloem.

Its subcellular location is the cell membrane. In terms of biological role, positive regulator of plant growth which acts as an efflux pump involved in the major root-to-shoot (acropetal) long-distance cytokinin (CK) transport via the xylem sap. Together with ABCG9 and ABCG11, required for vascular development by regulating lipid/sterol homeostasis. Involved in CK-dependent responses to oxidative stress such as hydrogen peroxide H(2)O(2). (Microbial infection) Required for SNC1-mediated defense response against the virulent pathogen Pseudomonas syringae pv. tomato DC3000 by promoting the accumulation of trans-zeatin (tZ)-type cytokinins (CK) in the shoot. The protein is ABC transporter G family member 14 of Arabidopsis thaliana (Mouse-ear cress).